Consider the following 295-residue polypeptide: G1/S-specific cyclin-D1 (295 aa).

The Cyclin N-terminal domain maps to 28 to 152; that stretch reads LRAMLKAEET…LLVNKLKWNL (125 aa). A disordered region spans residues 264-295; sequence QQSLDPKAAEEEEEEEEADLACTPTDVRDVNI. K270 is covalently cross-linked (Glycyl lysine isopeptide (Lys-Gly) (interchain with G-Cter in ubiquitin)). Positions 273–282 are enriched in acidic residues; it reads EEEEEEEEAD. T286 is subject to Phosphothreonine.

The protein belongs to the cyclin family. Cyclin D subfamily. In terms of assembly, interacts with either CDK4 or CDK6 protein kinase to form a serine/threonine kinase holoenzyme complex. The cyclin subunit imparts substrate specificity to the complex. Component of the ternary complex CCND1/CDK4/CDKN1B required for nuclear translocation and modulation of CDK4-mediated kinase activity. Interacts directly with CDKN1B. Can form similar complexes with either CDKN1A or CDKN2A. Interacts with UHRF2; the interaction ubiquitinates CCND1 and appears to occur independently of phosphorylation. Interacts with USP2. Interacts (via cyclin N-terminal domain) with INSM1 (via N-terminal region); the interaction competes with the binding of CCND1 to CDK4 during cell cycle progression and inhibits CDK4 activity. Interacts with CDK4; the interaction is prevented with the binding of CCND1 to INSM1 during cell cycle progression. Phosphorylation at Thr-286 by MAP kinases is required for ubiquitination and degradation by the DCX(AMBRA1) complex. It also plays an essential role for recognition by the FBXO31 component of SCF (SKP1-cullin-F-box) protein ligase complex following DNA damage. Post-translationally, ubiquitinated at Lys-270 by the DCX(AMBRA1) complex during the transition from G1 to S cell phase, leading to its degradation: ubiquitination is dependent on Thr-286 phosphorylation. The DCX(AMBRA1) complex represents the major regulator of CCND1 stability during the G1/S transition. Also ubiquitinated by the SCF(FBXO4) and Cul7-RING(FBXW8) ubiquitin-protein ligase complexes. Following DNA damage it is ubiquitinated by the SCF(FBXO31) protein ligase complex. SCF(FBXO31) ubiquitination is dependent on Thr-286 phosphorylation. Ubiquitinated also by UHRF2 apparently in a phosphorylation-independent manner. Ubiquitination leads to its degradation and G1 arrest. Deubiquitinated by USP2; leading to its stabilization.

Its subcellular location is the nucleus. The protein localises to the cytoplasm. It localises to the nucleus membrane. Its function is as follows. Regulatory component of the cyclin D1-CDK4 (DC) complex that phosphorylates and inhibits members of the retinoblastoma (RB) protein family including RB1 and regulates the cell-cycle during G(1)/S transition. Phosphorylation of RB1 allows dissociation of the transcription factor E2F from the RB/E2F complex and the subsequent transcription of E2F target genes which are responsible for the progression through the G(1) phase. Hypophosphorylates RB1 in early G(1) phase. Cyclin D-CDK4 complexes are major integrators of various mitogenenic and antimitogenic signals. Also a substrate for SMAD3, phosphorylating SMAD3 in a cell-cycle-dependent manner and repressing its transcriptional activity. Component of the ternary complex, cyclin D1/CDK4/CDKN1B, required for nuclear translocation and activity of the cyclin D-CDK4 complex. Exhibits transcriptional corepressor activity with INSM1 on the NEUROD1 and INS promoters in a cell cycle-independent manner. The protein is G1/S-specific cyclin-D1 (CCND1) of Canis lupus familiaris (Dog).